Consider the following 343-residue polypeptide: Methylthioribose-1-phosphate isomerase (343 aa).

Residues 48–50 (RGA), Arg-88, and Gln-193 contribute to the substrate site. Asp-234 acts as the Proton donor in catalysis. 244–245 (NK) is a binding site for substrate.

This sequence belongs to the eIF-2B alpha/beta/delta subunits family. MtnA subfamily.

It carries out the reaction 5-(methylsulfanyl)-alpha-D-ribose 1-phosphate = 5-(methylsulfanyl)-D-ribulose 1-phosphate. Its pathway is amino-acid biosynthesis; L-methionine biosynthesis via salvage pathway; L-methionine from S-methyl-5-thio-alpha-D-ribose 1-phosphate: step 1/6. Catalyzes the interconversion of methylthioribose-1-phosphate (MTR-1-P) into methylthioribulose-1-phosphate (MTRu-1-P). This Thermotoga neapolitana (strain ATCC 49049 / DSM 4359 / NBRC 107923 / NS-E) protein is Methylthioribose-1-phosphate isomerase.